Here is a 505-residue protein sequence, read N- to C-terminus: Probable alpha-L-arabinofuranosidase C (505 aa).

Residues asparagine 152, asparagine 181, and asparagine 269 are each glycosylated (N-linked (GlcNAc...) asparagine).

Belongs to the glycosyl hydrolase 51 family.

Its subcellular location is the secreted. The enzyme catalyses Hydrolysis of terminal non-reducing alpha-L-arabinofuranoside residues in alpha-L-arabinosides.. It participates in glycan metabolism; L-arabinan degradation. In terms of biological role, alpha-L-arabinofuranosidase involved in the degradation of arabinoxylan, a major component of plant hemicellulose. Acts only on small linear 1,5-alpha-linked L-arabinofuranosyl oligosaccharides. The polypeptide is Probable alpha-L-arabinofuranosidase C (abfC) (Aspergillus niger (strain ATCC MYA-4892 / CBS 513.88 / FGSC A1513)).